A 79-amino-acid chain; its full sequence is UPF0291 protein lp_2062 (79 aa).

Belongs to the UPF0291 family.

Its subcellular location is the cytoplasm. This Lactiplantibacillus plantarum (strain ATCC BAA-793 / NCIMB 8826 / WCFS1) (Lactobacillus plantarum) protein is UPF0291 protein lp_2062.